We begin with the raw amino-acid sequence, 343 residues long: Tetraacyldisaccharide 4'-kinase (343 aa).

51–58 lines the ATP pocket; that stretch reads HGGGAGKT.

The protein belongs to the LpxK family.

It carries out the reaction a lipid A disaccharide + ATP = a lipid IVA + ADP + H(+). It functions in the pathway glycolipid biosynthesis; lipid IV(A) biosynthesis; lipid IV(A) from (3R)-3-hydroxytetradecanoyl-[acyl-carrier-protein] and UDP-N-acetyl-alpha-D-glucosamine: step 6/6. In terms of biological role, transfers the gamma-phosphate of ATP to the 4'-position of a tetraacyldisaccharide 1-phosphate intermediate (termed DS-1-P) to form tetraacyldisaccharide 1,4'-bis-phosphate (lipid IVA). The polypeptide is Tetraacyldisaccharide 4'-kinase (Rhodopseudomonas palustris (strain BisB18)).